A 626-amino-acid chain; its full sequence is Nuclear RNA export factor 2 (626 aa).

Position 34 is a phosphoserine (S34). One can recognise an RRM domain in the interval 124–203 (WFKVTIPYGI…IFVNHSTAPY (80 aa)). LRR repeat units follow at residues 271-296 (ELLSLNLCNNKLYQLDGLSDITEKAP), 297-320 (KVKTLNLSKNKLESAWELGKVKGL), 321-348 (KLEELWLEGNPLCSTFSDQSAYVSAIRD), and 349-376 (CFPKLLRLDGRELSAPVIVDIDSSETMK). Residues 391–541 (LVLQFLQQYY…LCIVNDELFV (151 aa)) enclose the NTF2 domain. In terms of domain architecture, TAP-C spans 570–625 (QEQQEMVQAFSAQSGMKLEWSQKCLQDNEWNYTRAGQAFTMLQTEGKIPAEAFKQI).

This sequence belongs to the NXF family. Interacts with NXT1, NXT2, E1B-AP5, the REF proteins and with nucleoporins, Nup62, Nup153 and Nup214. Interacts with LUZP4. Expressed almost exclusively in testis. Also expressed in several cancers.

It is found in the nucleus. The protein localises to the nucleoplasm. It localises to the cytoplasm. Its function is as follows. Involved in the export of mRNA from the nucleus to the cytoplasm. This Homo sapiens (Human) protein is Nuclear RNA export factor 2 (NXF2).